A 787-amino-acid polypeptide reads, in one-letter code: uncharacterized protein (787 aa).

Residues 1-22 (MKFKYCAIFFSGFLGLSAILAA) form the signal peptide. The N-palmitoyl cysteine moiety is linked to residue Cys23. Cys23 is lipidated: S-diacylglycerol cysteine. 2 disordered regions span residues 178 to 270 (SDNV…DNKI) and 473 to 495 (KSKE…KKES). Over residues 181–208 (VKVSQRTGETTQKSKVTNPLKINTQNDP) the composition is skewed to polar residues. A compositionally biased stretch (basic and acidic residues) spans 209–219 (ATKDLWEKIEA). The span at 242–261 (SSSSSLVNLKQSTDQTTTDD) shows a compositional bias: low complexity.

The protein belongs to the MG185/MG260 family.

Its subcellular location is the cell membrane. This is an uncharacterized protein from Mycoplasma pneumoniae (strain ATCC 29342 / M129 / Subtype 1) (Mycoplasmoides pneumoniae).